Here is a 98-residue protein sequence, read N- to C-terminus: DNA-directed RNA polymerase subunit omega (98 aa).

The protein belongs to the RNA polymerase subunit omega family. In terms of assembly, the RNAP catalytic core consists of 2 alpha, 1 beta, 1 beta' and 1 omega subunit. When a sigma factor is associated with the core the holoenzyme is formed, which can initiate transcription.

It catalyses the reaction RNA(n) + a ribonucleoside 5'-triphosphate = RNA(n+1) + diphosphate. In terms of biological role, promotes RNA polymerase assembly. Latches the N- and C-terminal regions of the beta' subunit thereby facilitating its interaction with the beta and alpha subunits. The polypeptide is DNA-directed RNA polymerase subunit omega (Xylella fastidiosa (strain M12)).